We begin with the raw amino-acid sequence, 290 residues long: Arylamine N-acetyltransferase 1 (290 aa).

M1 carries the N-acetylmethionine modification. C68 functions as the Acyl-thioester intermediate in the catalytic mechanism. S103 serves as a coordination point for CoA. 106 to 107 contacts substrate; the sequence is VH. Residues H107 and D122 contribute to the active site. CoA is bound at residue Y208.

The protein belongs to the arylamine N-acetyltransferase family.

It localises to the cytoplasm. The enzyme catalyses an arylamine + acetyl-CoA = an N-acetylarylamine + CoA. Participates in the detoxification of a plethora of hydrazine and arylamine drugs. Isoniazid, 2-aminofluorene and anisidine are preferred substrates for NAT-1. No activity with p-aminobenzoic acid (PABA) nor SMZ. This chain is Arylamine N-acetyltransferase 1 (Nat1), found in Mus musculus (Mouse).